We begin with the raw amino-acid sequence, 431 residues long: Glutamate-1-semialdehyde 2,1-aminomutase (431 aa).

At Lys-269 the chain carries N6-(pyridoxal phosphate)lysine.

The protein belongs to the class-III pyridoxal-phosphate-dependent aminotransferase family. HemL subfamily. In terms of assembly, homodimer. Pyridoxal 5'-phosphate is required as a cofactor.

It localises to the cytoplasm. The catalysed reaction is (S)-4-amino-5-oxopentanoate = 5-aminolevulinate. It functions in the pathway porphyrin-containing compound metabolism; protoporphyrin-IX biosynthesis; 5-aminolevulinate from L-glutamyl-tRNA(Glu): step 2/2. The protein operates within porphyrin-containing compound metabolism; chlorophyll biosynthesis. The chain is Glutamate-1-semialdehyde 2,1-aminomutase from Prosthecochloris aestuarii (strain DSM 271 / SK 413).